Reading from the N-terminus, the 150-residue chain is Cytochrome c-type biogenesis protein CcmE (150 aa).

Residues 1-7 (MTRKQKR) lie on the Cytoplasmic side of the membrane. The chain crosses the membrane as a helical; Signal-anchor for type II membrane protein span at residues 8-28 (LAIIGGGVAFLTAAVLLVMFA). Residues 29–150 (FSQAVAYFYV…VTLGGEENIR (122 aa)) are Periplasmic-facing. Positions 123 and 127 each coordinate heme.

This sequence belongs to the CcmE/CycJ family.

It is found in the cell inner membrane. Its function is as follows. Heme chaperone required for the biogenesis of c-type cytochromes. Transiently binds heme delivered by CcmC and transfers the heme to apo-cytochromes in a process facilitated by CcmF and CcmH. The sequence is that of Cytochrome c-type biogenesis protein CcmE from Rhizobium meliloti (strain 1021) (Ensifer meliloti).